The primary structure comprises 416 residues: Counting factor 60 (416 aa).

The N-terminal stretch at 1–22 (MIKKSALITLFLVSLILGVSLS) is a signal peptide. N-linked (GlcNAc...) asparagine glycans are attached at residues asparagine 110, asparagine 218, asparagine 231, asparagine 318, and asparagine 411.

Belongs to the histidine acid phosphatase family. In terms of assembly, component of the counting factor (CF) complex, which includes cf60, cf50, cf45-1 and ctnA.

It localises to the secreted. In terms of biological role, cell-counting factor that limits the maximum size of the multicellular structure. Does not possess acid phosphatase activity. Cells with decreased levels of this protein form large groups while cells overexpressing this protein form small groups. This is Counting factor 60 (cf60) from Dictyostelium discoideum (Social amoeba).